The following is a 461-amino-acid chain: Putative cytochrome P450 132 (461 aa).

Residue C409 participates in heme binding.

It belongs to the cytochrome P450 family. It depends on heme as a cofactor.

This Mycobacterium bovis (strain ATCC BAA-935 / AF2122/97) protein is Putative cytochrome P450 132 (cyp132).